The chain runs to 345 residues: Phosphoribosylformylglycinamidine cyclo-ligase (345 aa).

It belongs to the AIR synthase family.

It localises to the cytoplasm. It carries out the reaction 2-formamido-N(1)-(5-O-phospho-beta-D-ribosyl)acetamidine + ATP = 5-amino-1-(5-phospho-beta-D-ribosyl)imidazole + ADP + phosphate + H(+). Its pathway is purine metabolism; IMP biosynthesis via de novo pathway; 5-amino-1-(5-phospho-D-ribosyl)imidazole from N(2)-formyl-N(1)-(5-phospho-D-ribosyl)glycinamide: step 2/2. The chain is Phosphoribosylformylglycinamidine cyclo-ligase from Myxococcus xanthus (strain DK1622).